We begin with the raw amino-acid sequence, 467 residues long: MREGSALPGAPGAAPVPGFLAKLWALVEDPQSDDVICWSRNGENFCILDEQRFAKELLPKYFKHNNISSFIRQLNMYGFRKVVALENGMITAEKNSVIEFQHPFFKQGNAHLLENIKRKVSAVRTEDLKVCAEDLHKVLSEVQEMREQQNNMDIRLANMKRENKALWKEVAVLRQKHSQQQKLLSKILQFILSLMRGNYIVGVKRKRSLTDAAGASPSKYSRQYVRIPVESGQAMAFSEHNSDDEDGNRTGLIIRDITDTLENATNGLLAVAHTSGRDRETQTALDPGLPICQVSQPNELSCAEPIPPVHINDVSKPNEMGNVAVELHTAQANAPEDPVSVIDSILNENNSGNQNDPLLDREEIQDFLNCIDASLEELQAMLSGKQYSFGSEAFSDVFNPELPALDMNLMETSPGMENIANMEDSTEDLGASERETAGSKGGQEGTESCDSSVLFQNCVLKWNFSSL.

Residues Val-16–Ser-121 mediate DNA binding. Residues Leu-128–Val-201 form a hydrophobic repeat HR-A/B region. The interval Ile-364 to Phe-389 is hydrophobic repeat HR-C. A disordered region spans residues Glu-427–Cys-449.

This sequence belongs to the HSF family. As to quaternary structure, homotrimer. As to expression, expressed in most tissues. High levels are found in erythrocytes and low levels in liver.

It is found in the cytoplasm. The protein localises to the nucleus. In terms of biological role, DNA-binding protein that specifically binds heat shock promoter elements (HSE) and activates transcription. HSF3 binds DNA constitutively only when the C-terminal region is deleted. This chain is Heat shock factor protein 3 (HSF3), found in Gallus gallus (Chicken).